We begin with the raw amino-acid sequence, 307 residues long: Protein rep (307 aa).

Residue Tyr219 coordinates DNA.

It belongs to the Gram-positive plasmids replication protein type 1 family.

The sequence is that of Protein rep (repA) from Bacillus sp.